Consider the following 443-residue polypeptide: Threonine/serine transporter TdcC (443 aa).

Transmembrane regions (helical) follow at residues 22-42 (TTWT…FFPI), 44-64 (AGFG…PIAF), 97-117 (GVVI…IYGV), 140-160 (FVAL…KDLM), 163-183 (VMSY…LSLI), 207-227 (ILIT…FSPI), 261-281 (MLMV…LSPA), 311-331 (FAIT…FKSF), 366-386 (LSMI…PNIL), 389-409 (IEAM…MYAI), and 423-443 (DNVF…YKLF).

It belongs to the amino acid/polyamine transporter 2 family. SdaC/TdcC subfamily.

It localises to the cell inner membrane. It catalyses the reaction L-threonine(in) + H(+)(in) = L-threonine(out) + H(+)(out). The catalysed reaction is L-serine(in) + H(+)(in) = L-serine(out) + H(+)(out). Functionally, involved in the import of threonine and serine into the cell, with the concomitant import of a proton (symport system). The polypeptide is Threonine/serine transporter TdcC (Shigella flexneri serotype 5b (strain 8401)).